A 485-amino-acid chain; its full sequence is E3 ubiquitin-protein ligase TRIM34B (485 aa).

The segment at 15 to 58 (CPVCQELLTKALSLGCGHLVCQACLISNKNAVINPRGKSSCPVC) adopts an RING-type zinc-finger fold. The B box-type zinc-finger motif lies at 91 to 127 (TKRDLCVHHGEKLLLFCKEDKKVICWVCERSQEHRGH). Residues cysteine 96, histidine 99, cysteine 118, and histidine 124 each contribute to the Zn(2+) site. The stretch at 136 to 170 (VRECQENLQKALTRLRKEQEKVETLEADIKEDRLS) forms a coiled coil. A B30.2/SPRY domain is found at 282 to 485 (LSGMLQKFRE…APMTLCPLNS (204 aa)).

The protein belongs to the TRIM/RBCC family. As to quaternary structure, homotrimer. Interacts (via B-box and SPRY domain) with TRIM5.

The protein localises to the cytoplasm. Its subcellular location is the mitochondrion. The catalysed reaction is S-ubiquitinyl-[E2 ubiquitin-conjugating enzyme]-L-cysteine + [acceptor protein]-L-lysine = [E2 ubiquitin-conjugating enzyme]-L-cysteine + N(6)-ubiquitinyl-[acceptor protein]-L-lysine.. Its pathway is protein modification; protein ubiquitination. Its function is as follows. Functions as antiviral protein and contributes to the defense against retroviral infections. Acts as a capsid-specific restriction factor with the help of TRIM5 and prevents infection from non-host-adapted retroviruses. During influenza A virus infection, promotes programmed cell death by targeting ZBP1 for 'Lys-63'-linked polyubiquitination. In turn, promotes ZBP1 recruitment of RIPK3 to mediate virus-induced programmed necrosis. Negatively regulates the function of mitochondria by enhancing mitochondrial depolarization leading to cytochrome c release and mitochondria-dependent apoptosis. Also promotes the formation of multinucleated giant cells by means of cell fusion and phagocytosis in epithelial cells. Regulates intestinal inflammation by controlling the exocytosis of the major component of colonic mucus MUC2 from colonic goblet cells. The chain is E3 ubiquitin-protein ligase TRIM34B from Mus musculus (Mouse).